Consider the following 424-residue polypeptide: Multifunctional CCA protein (424 aa).

2 residues coordinate ATP: Gly8 and Arg11. Residues Gly8 and Arg11 each contribute to the CTP site. Positions 21 and 23 each coordinate Mg(2+). ATP is bound by residues Arg91, Arg149, and Arg152. The CTP site is built by Arg91, Arg149, and Arg152. An HD domain is found at 238-339 (TGIHLMMVLD…VRLLERCDAF (102 aa)).

This sequence belongs to the tRNA nucleotidyltransferase/poly(A) polymerase family. Bacterial CCA-adding enzyme type 1 subfamily. Monomer. Can also form homodimers and oligomers. The cofactor is Mg(2+). Ni(2+) is required as a cofactor.

The catalysed reaction is a tRNA precursor + 2 CTP + ATP = a tRNA with a 3' CCA end + 3 diphosphate. It catalyses the reaction a tRNA with a 3' CCA end + 2 CTP + ATP = a tRNA with a 3' CCACCA end + 3 diphosphate. In terms of biological role, catalyzes the addition and repair of the essential 3'-terminal CCA sequence in tRNAs without using a nucleic acid template. Adds these three nucleotides in the order of C, C, and A to the tRNA nucleotide-73, using CTP and ATP as substrates and producing inorganic pyrophosphate. tRNA 3'-terminal CCA addition is required both for tRNA processing and repair. Also involved in tRNA surveillance by mediating tandem CCA addition to generate a CCACCA at the 3' terminus of unstable tRNAs. While stable tRNAs receive only 3'-terminal CCA, unstable tRNAs are marked with CCACCA and rapidly degraded. The polypeptide is Multifunctional CCA protein (Polaromonas naphthalenivorans (strain CJ2)).